The following is a 509-amino-acid chain: Methylthioalkylmalate synthase 1-1, chloroplastic (509 aa).

The N-terminal 55 residues, 1–55 (MSFSPTYSIVMASPLLTSSQMIPTTGSTVGFRSILPFGSLRLTRPYKKTSLFISY), are a transit peptide targeting the chloroplast. Residues 91–365 (VRVYDTTLRD…YTRIDTRQIM (275 aa)) form the Pyruvate carboxyltransferase domain. Positions 100, 298, and 300 each coordinate Mn(2+).

It belongs to the alpha-IPM synthase/homocitrate synthase family. As to quaternary structure, monomer. It depends on Mn(2+) as a cofactor. Co(2+) serves as cofactor.

It localises to the plastid. It is found in the chloroplast. It catalyses the reaction 4-methylsulfanyl-2-oxobutanoate + acetyl-CoA + H2O = 2-(2-methylsulfanyl)ethylmalate + CoA + H(+). Its pathway is secondary metabolite biosynthesis. With respect to regulation, inhibited by EDTA, Cu(2+) and Zn(2+). In terms of biological role, determines the side chain length of aliphatic glucosinolate structures. Involved in the biosynthesis of glucosinolate derivative natural products such as 6-(methylsulfinyl)hexylisothiocyanate (6-MSITC), a compound found in wasabi with diverse health-promoting properties. Catalyzes the conversion of 4-methylsulfanyl-2-oxobutanoate (4-MTOB) into 2-(2-methylsulfanyl)ethylmalate (2-(2-MT)EM). This Eutrema japonicum (Wasabi plant) protein is Methylthioalkylmalate synthase 1-1, chloroplastic.